The sequence spans 824 residues: DNA replication helicase (824 aa).

90-97 (GTAGAGKT) is a binding site for ATP.

This sequence belongs to the herpesviridae helicase family. As to quaternary structure, associates with the primase and the primase-associated factor to form the helicase-primase complex.

Its subcellular location is the host nucleus. Functionally, component of the helicase/primase complex. Unwinds the DNA at the replication forks and generates single-stranded DNA for both leading and lagging strand synthesis. The primase synthesizes short RNA primers on the lagging strand that the polymerase elongates using dNTPs. Possesses helicase-like motifs and therefore may act as the helicase subunit of the complex. The protein is DNA replication helicase of Human herpesvirus 6B (strain Z29) (HHV-6 variant B).